The primary structure comprises 282 residues: Aquaporin NIP1-1 (282 aa).

2 helical membrane passes run 46–66 (IIAE…AVTI) and 74–94 (ITFP…VYAV). The NPA 1 signature appears at 103–105 (NPA). Helical transmembrane passes span 125 to 145 (VLAQ…MFGG), 162 to 182 (SLVI…GVAT), and 186 to 206 (AIGE…VLIA). The NPA 2 signature appears at 215-217 (NPA). Residues 232-252 (IWVYVVGPVVGAVAGAWAYNL) form a helical membrane-spanning segment.

The protein belongs to the MIP/aquaporin (TC 1.A.8) family. NIP (TC 1.A.8.12) subfamily.

The protein resides in the membrane. Its function is as follows. Aquaporins facilitate the transport of water and small neutral solutes across cell membranes. The chain is Aquaporin NIP1-1 (NIP1-1) from Zea mays (Maize).